We begin with the raw amino-acid sequence, 143 residues long: Transcriptional regulator MraZ (143 aa).

2 consecutive SpoVT-AbrB domains span residues 5 to 47 and 76 to 119; these read TFTP…PRNV and ADEQ…NAES.

Belongs to the MraZ family. Forms oligomers.

The protein resides in the cytoplasm. The protein localises to the nucleoid. This chain is Transcriptional regulator MraZ, found in Corynebacterium kroppenstedtii (strain DSM 44385 / JCM 11950 / CIP 105744 / CCUG 35717).